Reading from the N-terminus, the 271-residue chain is Fatty acid elongase A (271 aa).

Transmembrane regions (helical) follow at residues 35–55 (ILFP…LQIF), 68–88 (AMFH…GIVI), 102–122 (IICK…FYLS), 139–159 (SLLF…WANL), 165–185 (CQWV…FYYF), 198–220 (HITT…WHFY), and 237–257 (TSAF…QFFV).

The protein belongs to the ELO family.

It localises to the membrane. It catalyses the reaction a very-long-chain acyl-CoA + malonyl-CoA + H(+) = a very-long-chain 3-oxoacyl-CoA + CO2 + CoA. Its function is as follows. Fatty acid elongase with strict substrate specificity for monounsaturated fatty acids, in particular 16:1 (delta-9) to produce the unusual 18:1 (delta-11) fatty acid. This Dictyostelium discoideum (Social amoeba) protein is Fatty acid elongase A (eloA).